Reading from the N-terminus, the 473-residue chain is BTB/POZ domain-containing protein KCTD8 (473 aa).

Residues 1-36 (MALKDTGSGGSTILPISEMVSSSSSPGASAAAAPGP) are disordered. The segment covering 21-35 (SSSSSPGASAAAAPG) has biased composition (low complexity). The region spanning 44-122 (EVVELNVGGQ…LRDKQLALPE (79 aa)) is the BTB domain. Residue Ser78 is modified to Phosphoserine. Arg80 is modified (omega-N-methylarginine). The segment at 326–409 (IVSPKQEHED…WIPPPDKRRN (84 aa)) is disordered. The span at 330 to 346 (KQEHEDRKHDKVTDKGS) shows a compositional bias: basic and acidic residues. The span at 347–388 (ESGTSCNELSTSSCDSHSEASTPQDNPSSAQQATAHQPNTLT) shows a compositional bias: polar residues. Ser410 carries the post-translational modification Phosphoserine.

In terms of assembly, interacts as a tetramer with GABRB1 and GABRB2.

It is found in the presynaptic cell membrane. It localises to the postsynaptic cell membrane. In terms of biological role, auxiliary subunit of GABA-B receptors that determine the pharmacology and kinetics of the receptor response. Increases agonist potency and markedly alter the G-protein signaling of the receptors by accelerating onset and promoting desensitization. This chain is BTB/POZ domain-containing protein KCTD8 (KCTD8), found in Homo sapiens (Human).